The chain runs to 348 residues: Putative transport protein HP_0567 (348 aa).

8 consecutive transmembrane segments (helical) span residues 6–26, 27–47, 56–76, 143–163, 194–214, 224–244, 266–286, and 300–320; these read FFWI…QDFL, MDAL…VFLD, SFLC…FIVY, LKLI…FYYG, IVLL…GVMI, LGIL…LIWI, SILL…IVFI, and MLIF…GIIV.

This sequence belongs to the autoinducer-2 exporter (AI-2E) (TC 2.A.86) family.

The protein resides in the cell membrane. The polypeptide is Putative transport protein HP_0567 (Helicobacter pylori (strain ATCC 700392 / 26695) (Campylobacter pylori)).